The following is a 290-amino-acid chain: Porphobilinogen deaminase (290 aa).

An S-(dipyrrolylmethanemethyl)cysteine modification is found at Cys238.

It belongs to the HMBS family. In terms of assembly, monomer. It depends on dipyrromethane as a cofactor.

It catalyses the reaction 4 porphobilinogen + H2O = hydroxymethylbilane + 4 NH4(+). Its pathway is porphyrin-containing compound metabolism; protoporphyrin-IX biosynthesis; coproporphyrinogen-III from 5-aminolevulinate: step 2/4. In terms of biological role, tetrapolymerization of the monopyrrole PBG into the hydroxymethylbilane pre-uroporphyrinogen in several discrete steps. This is Porphobilinogen deaminase from Clostridium botulinum (strain Eklund 17B / Type B).